The sequence spans 326 residues: G-protein coupled receptor 1 (326 aa).

Position 2 is an N-acetylserine (serine 2). Residues 2-23 (SAVLTAGGGLTAGDRSIITAIN) lie on the Extracellular side of the membrane. A helical transmembrane segment spans residues 24–44 (TGASSLSFVGSAFIVLCYCLF). The Cytoplasmic portion of the chain corresponds to 45 to 51 (KELRKFS). The helical transmembrane segment at 52-72 (FKLVFYLALSDMLCSFFLIVG) threads the bilayer. Residues 73 to 84 (DPSKGFICYAQG) are Extracellular-facing. Cysteines 80 and 151 form a disulfide. The chain crosses the membrane as a helical span at residues 85-105 (YTTHFFCVASFLWTTTIAFTL). Residues 106–120 (HRTVVKHKTDVEDLE) are Cytoplasmic-facing. The chain crosses the membrane as a helical span at residues 121–141 (AMFHLYVWGTSLVVTVIRSFG). At 142–160 (NNHSHLGPWCWTQTGLKGK) the chain is on the extracellular side. Residue asparagine 143 is glycosylated (N-linked (GlcNAc...) asparagine). Residues 161–181 (AVHFLTFYAPLWGAILYNGFT) form a helical membrane-spanning segment. Residues 182–213 (YFQVIRMLRNARRMAVGMSDRVDQFDNRAELK) lie on the Cytoplasmic side of the membrane. A helical transmembrane segment spans residues 214 to 234 (VLNRWGYYPLILIGSWAFGTI). Topologically, residues 235 to 246 (NRIHDFIEPGHK) are extracellular. The helical transmembrane segment at 247–267 (IFWLSVLDVGTAALMGLFNSI) threads the bilayer. The Cytoplasmic segment spans residues 268 to 326 (AYGFNSSVRRAIHERLELFLPERLYRWLPSNFRPKNHLILHQQQQQRSEMVSLKTEDQQ).

This sequence belongs to the G-protein coupled receptor 2 family. Interacts with GPA1. In terms of tissue distribution, mostly present in the meristematic regions. Expressed at low levels in seedlings, vascular tissues of cotyledons, hypocotyl, and roots, stems, leaves, flowering buds and siliques. In dark-grown seedlings, localized in the cotyledons and the hook.

It localises to the cell membrane. Together with GPA1, may regulate the cell cycle via a signaling cascade that uses phosphatidylinositol-specific phospholipase C (PI-PLC) as an effector and inositol 1,4,5-trisphosphate(IP(3)) as a second messenger. Promotes PI-PLC activity and IP(3) accumulation. Involved in the blue light (BL) signaling. Together with GPA1 and ADT3, required for BL-mediated synthesis of phenylpyruvate and subsequently of phenylalanine (Phe), in etiolated seedlings. Probably involved in cytokinin signal transduction. Plays a positive role in gibberellin- (GA) and brassinosteroid- (BR) regulated seed germination, probably independently of a heterotrimeric G-protein. Mediates seed dormancy abolition, and promotes seed germination and flowering. The protein is G-protein coupled receptor 1 (GCR1) of Arabidopsis thaliana (Mouse-ear cress).